A 109-amino-acid chain; its full sequence is Aquaporin-2 (109 aa).

The Cytoplasmic segment spans residues 1–6 (SVAFSR). A helical membrane pass occupies residues 7–27 (AVLAEFLATLIFVFFGLGSAL). Residues 28–35 (SWPQALPS) are Extracellular-facing. The chain crosses the membrane as a helical span at residues 36-54 (VLQIALAFGLAIGTLVQAL). Residues 55 to 59 (GHVSG) lie on the Cytoplasmic side of the membrane. The discontinuously helical intramembrane region spans 60 to 69 (AHINPAVTVA). The NPA 1 motif lies at 63-65 (NPA). The Cytoplasmic portion of the chain corresponds to 70–80 (CLVGCHVSFLR). Residues 81–102 (AAFYVAAQLLGAVAGAAILHEI) form a helical membrane-spanning segment. Residues 103–109 (TPPDVRG) are Extracellular-facing.

The protein belongs to the MIP/aquaporin (TC 1.A.8) family. In terms of assembly, homotetramer. Serine phosphorylation is necessary and sufficient for expression at the apical membrane. Endocytosis is not phosphorylation-dependent. In terms of processing, N-glycosylated.

It localises to the apical cell membrane. The protein localises to the basolateral cell membrane. Its subcellular location is the cell membrane. It is found in the cytoplasmic vesicle membrane. The protein resides in the golgi apparatus. It localises to the trans-Golgi network membrane. It catalyses the reaction H2O(in) = H2O(out). The catalysed reaction is glycerol(in) = glycerol(out). Forms a water-specific channel that provides the plasma membranes of renal collecting duct with high permeability to water, thereby permitting water to move in the direction of an osmotic gradient. Plays an essential role in renal water homeostasis. Could also be permeable to glycerol. In Dasypus novemcinctus (Nine-banded armadillo), this protein is Aquaporin-2.